The following is a 609-amino-acid chain: MDPNEKGIEVLSFIDEQAECSGSDSEEGYEESQSDLSDLIDNTECEQGNSAELFAQQEALAVQEHIRASKRKLKLSFRNPLQCITSHSNRTPSRAAPKRRKLDDSGYNEDILGEVAQVDENGGSEGYGSLGSQNVSGRVQVCNVNAANKENDLCGSFLRAGSRRATQLAIFKDKFNISFNSLTRPFKNDKTCCNNWVGAMFGARDELLEASKMLLQRHCDYLMLLMHTCKLGFMALYLLEFKHAKSRETIRHLFQQILQIEKEEMFLEPPKLKSLPAATFWWKISHSASAYIYGELPDWIARQTSLSHQRQDDQPFDLSQMVQWAYDHNYTDEPTIAYNYARMASEDSNAAAFLRCNSQVKFVKECAQMTKYYKTAEMREMSMGKWIKRALDEISGTGDWKDIINFLKYQGINFLSFLASFKDLLHGIPKRNCLVIVGPPNTGKSMFVMSLMKALKGRVLSFVNSKSHFWLQPLNAAKIAVLDDATKATWSYIDTYLRNGLDGTPVSLDMKHRAPIQICFPPLLITTNVQVMKDPLYMYLHSRLMCFEFPNPFPLNEAGQPALILNELSWKSFFARLWRQLDLSDAEDAEDGEPPSPFRCCARSADRHL.

The short motif at 70–72 (KRK) is the Nuclear localization signal element. The residue at position 76 (Ser-76) is a Phosphoserine; by host. Residues 84–103 (ITSHSNRTPSRAAPKRRKLD) are disordered. The tract at residues 146 to 313 (AANKENDLCG…TSLSHQRQDD (168 aa)) is DNA-binding region. The SF3 helicase domain occupies 398–562 (GDWKDIINFL…FPLNEAGQPA (165 aa)). 438–445 (GPPNTGKS) contacts ATP.

The protein belongs to the papillomaviridae E1 protein family. Can form hexamers. Interacts with E2 protein; this interaction increases E1 DNA binding specificity. Interacts with host DNA polymerase subunit POLA2. Interacts with host single stranded DNA-binding protein RPA1. Interacts with host TOP1; this interaction stimulates the enzymatic activity of TOP1. Post-translationally, phosphorylated.

The protein resides in the host nucleus. The catalysed reaction is Couples ATP hydrolysis with the unwinding of duplex DNA by translocating in the 3'-5' direction.. It carries out the reaction ATP + H2O = ADP + phosphate + H(+). ATP-dependent DNA 3'-5' helicase required for initiation of viral DNA replication. It forms a complex with the viral E2 protein. The E1-E2 complex binds to the replication origin which contains binding sites for both proteins. During the initial step, a dimer of E1 interacts with a dimer of protein E2 leading to a complex that binds the viral origin of replication with high specificity. Then, a second dimer of E1 displaces the E2 dimer in an ATP-dependent manner to form the E1 tetramer. Following this, two E1 monomers are added to each half of the site, which results in the formation of two E1 trimers on the viral ori. Subsequently, two hexamers will be created. The double hexamer acts as a bi-directional helicase machinery and unwinds the viral DNA and then recruits the host DNA polymerase to start replication. This Bos taurus (Bovine) protein is Replication protein E1.